A 90-amino-acid polypeptide reads, in one-letter code: Potassium channel toxin BmTXK-beta (90 aa).

An N-terminal signal peptide occupies residues 1–22; sequence MMKQQFFLFLAVIVMISSVIEA. A propeptide spanning residues 23-29 is cleaved from the precursor; it reads GRGKEIM. The 36-residue stretch at 55–90 folds into the BetaSPN-type CS-alpha/beta domain; the sequence is EYACPVIEKWCEDHCAAKKAIGKCEDTECKCLKLRK. Disulfide bonds link Cys-58–Cys-78, Cys-65–Cys-83, and Cys-69–Cys-85.

It belongs to the long chain scorpion toxin family. Class 2 subfamily. In terms of tissue distribution, expressed by the venom gland.

Its subcellular location is the secreted. This recombinant peptide reversibly and dose-dependently inhibits the transient outward potassium current (I(To)) of rabbit atrial myocyte and prolongs the action potential duration of rabbit atrial myocyte without affecting the action potential amplitude. Thus, the voltage-gated potassium channels Kv4.1/KCND1, Kv4.2/KCND2, Kv4.3/KCND3 may be the target of this toxin. The protein is Potassium channel toxin BmTXK-beta of Olivierus martensii (Manchurian scorpion).